The sequence spans 282 residues: Shikimate dehydrogenase (NADP(+)) (282 aa).

Shikimate-binding positions include 16–18 and T63; that span reads SLS. The active-site Proton acceptor is the K67. The shikimate site is built by N88 and D103. Residues 128 to 132 and L219 each bind NADP(+); that span reads GAGGA. Y221 is a binding site for shikimate. Residue G243 participates in NADP(+) binding.

This sequence belongs to the shikimate dehydrogenase family. In terms of assembly, homodimer.

The catalysed reaction is shikimate + NADP(+) = 3-dehydroshikimate + NADPH + H(+). Its pathway is metabolic intermediate biosynthesis; chorismate biosynthesis; chorismate from D-erythrose 4-phosphate and phosphoenolpyruvate: step 4/7. In terms of biological role, involved in the biosynthesis of the chorismate, which leads to the biosynthesis of aromatic amino acids. Catalyzes the reversible NADPH linked reduction of 3-dehydroshikimate (DHSA) to yield shikimate (SA). The chain is Shikimate dehydrogenase (NADP(+)) from Xylella fastidiosa (strain M12).